We begin with the raw amino-acid sequence, 183 residues long: ATP synthase subunit b, chloroplastic (183 aa).

The helical transmembrane segment at 27–49 (LATNPINLSVVLGVLIFFGKGVL) threads the bilayer.

This sequence belongs to the ATPase B chain family. As to quaternary structure, F-type ATPases have 2 components, F(1) - the catalytic core - and F(0) - the membrane proton channel. F(1) has five subunits: alpha(3), beta(3), gamma(1), delta(1), epsilon(1). F(0) has four main subunits: a(1), b(1), b'(1) and c(10-14). The alpha and beta chains form an alternating ring which encloses part of the gamma chain. F(1) is attached to F(0) by a central stalk formed by the gamma and epsilon chains, while a peripheral stalk is formed by the delta, b and b' chains.

Its subcellular location is the plastid. It localises to the chloroplast thylakoid membrane. Its function is as follows. F(1)F(0) ATP synthase produces ATP from ADP in the presence of a proton or sodium gradient. F-type ATPases consist of two structural domains, F(1) containing the extramembraneous catalytic core and F(0) containing the membrane proton channel, linked together by a central stalk and a peripheral stalk. During catalysis, ATP synthesis in the catalytic domain of F(1) is coupled via a rotary mechanism of the central stalk subunits to proton translocation. Component of the F(0) channel, it forms part of the peripheral stalk, linking F(1) to F(0). The sequence is that of ATP synthase subunit b, chloroplastic from Ranunculus macranthus (Large buttercup).